We begin with the raw amino-acid sequence, 767 residues long: Start control protein cdc10 (767 aa).

Residues 17–44 (FSYQKRPEDEPSQPLSNRNINKLNDSST) are disordered. Positions 29–44 (QPLSNRNINKLNDSST) are enriched in polar residues. The HTH APSES-type domain occupies 66–173 (ELYAVECSGM…FNLDLFPKFS (108 aa)). Residues 98-119 (ISQILRLAGTSSSENAKELDDI) constitute a DNA-binding region (H-T-H motif). The interval 189–230 (TSSFNTRSPLRNHNFSNPSKSSKNGVHTINNMQSSPSPSSSF) is disordered. Residues 192–221 (FNTRSPLRNHNFSNPSKSSKNGVHTINNMQ) show a composition bias toward polar residues. Serine 252 carries the post-translational modification Phosphoserine. The Nuclear localization signal signature appears at 261 to 264 (KRHR). ANK repeat units follow at residues 356–385 (LGHAALHWAAAVAKMPLLQALIHKGANPLR) and 483–512 (NGDTALNIAARIGNKNIVEVLMQAGASAYI). Residues 542–562 (VSLMSENLSSKEKTAVPPRQK) are disordered.

In terms of assembly, DSC1 contains cdc10 and sct1/res1. Interacts with pol5.

The protein localises to the nucleus. Its function is as follows. Major component of the cell cycle transcription factor complex MBF (MCB binding factor, also known as DSC1), that controls G1-S phase specific gene expression. Involved in the control of rRNA production, via interaction with pol5. May be involved in the transcriptional regulation of the cdc22 and cdt1 genes. In fission yeast, two genes, cdc10 and cdc2, are required for the cell cycle control called start, the point early in the G1 phase at which cells become committed to the mitotic cycle. This chain is Start control protein cdc10 (cdc10), found in Schizosaccharomyces pombe (strain 972 / ATCC 24843) (Fission yeast).